Here is a 594-residue protein sequence, read N- to C-terminus: Protein CBFA2T2 (594 aa).

At Ser24 the chain carries Phosphoserine. Lys29 participates in a covalent cross-link: Glycyl lysine isopeptide (Lys-Gly) (interchain with G-Cter in SUMO2). The tract at residues 48 to 96 is disordered; sequence GGPRPVSFTPTALSNGINHSPPTLNGAPSPPQRFSNGPASSTSSALTNQ. Composition is skewed to polar residues over residues 55–70 and 79–96; these read FTPT…SPPT and QRFS…LTNQ. The segment at 98–206 is interaction with PRDM14; it reads LPATCGARQL…QHEHLLLNTS (109 aa). Positions 104–199 constitute a TAFH domain; sequence ARQLSKLKRF…TPSQYLAQHE (96 aa). Residues 220–257 are disordered; it reads VHGNGKRPSPERRDENNFERDTVPPEPPAKRVCTISPA. The segment covering 227–242 has biased composition (basic and acidic residues); sequence PSPERRDENNFERDTV. Position 255 is a phosphoserine (Ser255). A nervy homology region 2 (NHR2) region spans residues 322 to 368; it reads QDELVDHRLTEREWADEWKHLDHALNCIMEMVEKTRRSMAVLRRCQE. Positions 388–416 are disordered; that stretch reads RKTGTELVSRQHSPGSTDSLSNDSQREFT. Over residues 393 to 410 the composition is skewed to polar residues; the sequence is ELVSRQHSPGSTDSLSND. Residue Ser400 is modified to Phosphoserine. Positions 426 to 475 are nervy homology region 3 (NHR3); that stretch reads VEFWKKTEEAVNKVKIQAMSEVQKAVAEAEQKAFEVIATERARMEQTIAD. Lys440 is covalently cross-linked (Glycyl lysine isopeptide (Lys-Gly) (interchain with G-Cter in SUMO2)). Residues 442 to 482 are a coiled coil; the sequence is QAMSEVQKAVAEAEQKAFEVIATERARMEQTIADVKRQAAE. Residues Cys498, Cys501, Cys509, Cys512, Cys518, Cys522, His530, and Cys534 each contribute to the Zn(2+) site. Residues 498-534 form an MYND-type zinc finger; sequence CWNCGRKASETCSGCNIARYCGSFCQHKDWERHHRLC. A disordered region spans residues 538–594; that stretch reads LHGHSPHSQSRPLLPGGRGSARSADCSVPSPALDKTSATTSRSSTPASVTAIDANGL. At Ser567 the chain carries Phosphoserine. Residues 573–588 are compositionally biased toward low complexity; it reads TSATTSRSSTPASVTA.

This sequence belongs to the CBFA2T family. In terms of assembly, homooligomer. Homotetramerization is mediated by the NHR2 domain. Interacts with CBFA2T3/MTG16. Can interact with RUNX1T1/CBFA2T1. Heterotetramerization between members of the CBFA2T family is proposed. Interacts with RBP, GFI1, TCF4, PRDM14. Interacts with TAL1 and CBFA2T3/MTG16; the heteromer with CBFA2T3/MTG16 may function in repression of TAL1. In terms of tissue distribution, expressed in embryonic stem cells.

The protein localises to the nucleus. Transcriptional corepressor which facilitates transcriptional repression via its association with DNA-binding transcription factors and recruitment of other corepressors and histone-modifying enzymes. Via association with PRDM14 is involved in regulation of embryonic stem cell (ESC) pluripotency. Involved in primordial germ cell (PCG) formation. Stabilizes PRDM14 and OCT4 on chromatin in a homooligomerization-dependent mannerCan repress the expression of MMP7 in a ZBTB33-dependent manner. Through heteromerization with CBFA2T3/MTG16 may be involved in regulation of the proliferation and the differentiation of erythroid progenitors by repressing the expression of TAL1 target genes. Required for the maintenance of the secretory cell lineage in the small intestine. Can inhibit Notch signaling probably by association with RBPJ and may be involved in GFI1-mediated Paneth cell differentiation. The polypeptide is Protein CBFA2T2 (Cbfa2t2) (Mus musculus (Mouse)).